We begin with the raw amino-acid sequence, 100 residues long: NADH-quinone oxidoreductase subunit K (100 aa).

3 helical membrane passes run 4–24 (LQHG…GLII), 28–48 (LLFM…AFVV), and 60–80 (VMYI…LALL).

It belongs to the complex I subunit 4L family. As to quaternary structure, NDH-1 is composed of 13 different subunits. Subunits NuoA, H, J, K, L, M, N constitute the membrane sector of the complex.

The protein localises to the cell inner membrane. The catalysed reaction is a quinone + NADH + 5 H(+)(in) = a quinol + NAD(+) + 4 H(+)(out). Its function is as follows. NDH-1 shuttles electrons from NADH, via FMN and iron-sulfur (Fe-S) centers, to quinones in the respiratory chain. The immediate electron acceptor for the enzyme in this species is believed to be ubiquinone. Couples the redox reaction to proton translocation (for every two electrons transferred, four hydrogen ions are translocated across the cytoplasmic membrane), and thus conserves the redox energy in a proton gradient. This is NADH-quinone oxidoreductase subunit K from Yersinia enterocolitica serotype O:8 / biotype 1B (strain NCTC 13174 / 8081).